A 213-amino-acid polypeptide reads, in one-letter code: Pyridoxine/pyridoxamine 5'-phosphate oxidase (213 aa).

Substrate is bound by residues 8–11 (RKNY) and Lys66. FMN is bound by residues 61 to 66 (RIVLIK), 76 to 77 (FT), Arg82, Lys83, and Gln105. Positions 123, 127, and 131 each coordinate substrate. Residues 140 to 141 (QS) and Trp184 each bind FMN. 190–192 (RLH) provides a ligand contact to substrate. FMN is bound at residue Arg194.

This sequence belongs to the pyridoxamine 5'-phosphate oxidase family. As to quaternary structure, homodimer. The cofactor is FMN.

The enzyme catalyses pyridoxamine 5'-phosphate + O2 + H2O = pyridoxal 5'-phosphate + H2O2 + NH4(+). The catalysed reaction is pyridoxine 5'-phosphate + O2 = pyridoxal 5'-phosphate + H2O2. Its pathway is cofactor metabolism; pyridoxal 5'-phosphate salvage; pyridoxal 5'-phosphate from pyridoxamine 5'-phosphate: step 1/1. It functions in the pathway cofactor metabolism; pyridoxal 5'-phosphate salvage; pyridoxal 5'-phosphate from pyridoxine 5'-phosphate: step 1/1. Functionally, catalyzes the oxidation of either pyridoxine 5'-phosphate (PNP) or pyridoxamine 5'-phosphate (PMP) into pyridoxal 5'-phosphate (PLP). The protein is Pyridoxine/pyridoxamine 5'-phosphate oxidase of Paraburkholderia xenovorans (strain LB400).